A 617-amino-acid polypeptide reads, in one-letter code: Dihydroxy-acid dehydratase (617 aa).

Mg(2+) is bound at residue Asp81. Cys122 lines the [2Fe-2S] cluster pocket. The Mg(2+) site is built by Asp123 and Lys124. Lys124 carries the N6-carboxylysine modification. Position 195 (Cys195) interacts with [2Fe-2S] cluster. Glu491 lines the Mg(2+) pocket. The active-site Proton acceptor is Ser517.

Belongs to the IlvD/Edd family. As to quaternary structure, homodimer. The cofactor is [2Fe-2S] cluster. Mg(2+) serves as cofactor.

It catalyses the reaction (2R)-2,3-dihydroxy-3-methylbutanoate = 3-methyl-2-oxobutanoate + H2O. The enzyme catalyses (2R,3R)-2,3-dihydroxy-3-methylpentanoate = (S)-3-methyl-2-oxopentanoate + H2O. It functions in the pathway amino-acid biosynthesis; L-isoleucine biosynthesis; L-isoleucine from 2-oxobutanoate: step 3/4. Its pathway is amino-acid biosynthesis; L-valine biosynthesis; L-valine from pyruvate: step 3/4. Functionally, functions in the biosynthesis of branched-chain amino acids. Catalyzes the dehydration of (2R,3R)-2,3-dihydroxy-3-methylpentanoate (2,3-dihydroxy-3-methylvalerate) into 2-oxo-3-methylpentanoate (2-oxo-3-methylvalerate) and of (2R)-2,3-dihydroxy-3-methylbutanoate (2,3-dihydroxyisovalerate) into 2-oxo-3-methylbutanoate (2-oxoisovalerate), the penultimate precursor to L-isoleucine and L-valine, respectively. This is Dihydroxy-acid dehydratase from Buchnera aphidicola subsp. Diuraphis noxia.